Consider the following 363-residue polypeptide: Aminomethyltransferase (363 aa).

This sequence belongs to the GcvT family. The glycine cleavage system is composed of four proteins: P, T, L and H.

It carries out the reaction N(6)-[(R)-S(8)-aminomethyldihydrolipoyl]-L-lysyl-[protein] + (6S)-5,6,7,8-tetrahydrofolate = N(6)-[(R)-dihydrolipoyl]-L-lysyl-[protein] + (6R)-5,10-methylene-5,6,7,8-tetrahydrofolate + NH4(+). In terms of biological role, the glycine cleavage system catalyzes the degradation of glycine. This is Aminomethyltransferase from Staphylococcus haemolyticus (strain JCSC1435).